We begin with the raw amino-acid sequence, 78 residues long: HssA/B-like protein 29 (78 aa).

The disordered stretch occupies residues M1–M31.

Belongs to the hssA/B family.

The protein is HssA/B-like protein 29 (hssl29) of Dictyostelium discoideum (Social amoeba).